Here is a 303-residue protein sequence, read N- to C-terminus: mRNA-capping enzyme subunit beta (303 aa).

It belongs to the fungal TPase family. As to quaternary structure, heterodimer. The mRNA-capping enzyme is composed of two separate chains alpha and beta, respectively a mRNA guanylyltransferase and an mRNA 5'-triphosphate monophosphatase. It depends on Mg(2+) as a cofactor.

It localises to the nucleus. It catalyses the reaction a 5'-end triphospho-ribonucleoside in mRNA + H2O = a 5'-end diphospho-ribonucleoside in mRNA + phosphate + H(+). Its function is as follows. First step of mRNA capping. Converts the 5'-triphosphate end of a nascent mRNA chain into a diphosphate end. The protein is mRNA-capping enzyme subunit beta (pct1) of Schizosaccharomyces pombe (strain 972 / ATCC 24843) (Fission yeast).